A 62-amino-acid polypeptide reads, in one-letter code: Large ribosomal subunit protein uL30 (62 aa).

It belongs to the universal ribosomal protein uL30 family. In terms of assembly, part of the 50S ribosomal subunit.

In Halalkalibacterium halodurans (strain ATCC BAA-125 / DSM 18197 / FERM 7344 / JCM 9153 / C-125) (Bacillus halodurans), this protein is Large ribosomal subunit protein uL30.